The chain runs to 272 residues: Indole-3-glycerol phosphate synthase (272 aa).

This sequence belongs to the TrpC family.

It catalyses the reaction 1-(2-carboxyphenylamino)-1-deoxy-D-ribulose 5-phosphate + H(+) = (1S,2R)-1-C-(indol-3-yl)glycerol 3-phosphate + CO2 + H2O. The protein operates within amino-acid biosynthesis; L-tryptophan biosynthesis; L-tryptophan from chorismate: step 4/5. This chain is Indole-3-glycerol phosphate synthase, found in Mycobacterium sp. (strain JLS).